We begin with the raw amino-acid sequence, 456 residues long: Bifunctional protein GlmU (456 aa).

The segment at 1–229 is pyrophosphorylase; sequence MLNNAMSVVI…LSEVEGVNNR (229 aa). UDP-N-acetyl-alpha-D-glucosamine is bound by residues 11–14, Lys25, Gln76, 81–82, 103–105, Gly140, Glu154, Asn169, and Asn227; these read LAAG, GT, and YGD. Residue Asp105 coordinates Mg(2+). A Mg(2+)-binding site is contributed by Asn227. Positions 230–250 are linker; the sequence is LQLSRLERVYQSEQAEKLLLA. The segment at 251–456 is N-acetyltransferase; the sequence is GVMLRDPARF…EGWRRPVKKK (206 aa). Positions 333 and 351 each coordinate UDP-N-acetyl-alpha-D-glucosamine. His363 (proton acceptor) is an active-site residue. UDP-N-acetyl-alpha-D-glucosamine-binding residues include Tyr366 and Asn377. Acetyl-CoA-binding positions include Ala380, 386 to 387, Ser405, Ala423, and Arg440; that span reads NY.

It in the N-terminal section; belongs to the N-acetylglucosamine-1-phosphate uridyltransferase family. The protein in the C-terminal section; belongs to the transferase hexapeptide repeat family. In terms of assembly, homotrimer. Mg(2+) serves as cofactor.

It localises to the cytoplasm. It carries out the reaction alpha-D-glucosamine 1-phosphate + acetyl-CoA = N-acetyl-alpha-D-glucosamine 1-phosphate + CoA + H(+). The catalysed reaction is N-acetyl-alpha-D-glucosamine 1-phosphate + UTP + H(+) = UDP-N-acetyl-alpha-D-glucosamine + diphosphate. Its pathway is nucleotide-sugar biosynthesis; UDP-N-acetyl-alpha-D-glucosamine biosynthesis; N-acetyl-alpha-D-glucosamine 1-phosphate from alpha-D-glucosamine 6-phosphate (route II): step 2/2. It participates in nucleotide-sugar biosynthesis; UDP-N-acetyl-alpha-D-glucosamine biosynthesis; UDP-N-acetyl-alpha-D-glucosamine from N-acetyl-alpha-D-glucosamine 1-phosphate: step 1/1. It functions in the pathway bacterial outer membrane biogenesis; LPS lipid A biosynthesis. Its function is as follows. Catalyzes the last two sequential reactions in the de novo biosynthetic pathway for UDP-N-acetylglucosamine (UDP-GlcNAc). The C-terminal domain catalyzes the transfer of acetyl group from acetyl coenzyme A to glucosamine-1-phosphate (GlcN-1-P) to produce N-acetylglucosamine-1-phosphate (GlcNAc-1-P), which is converted into UDP-GlcNAc by the transfer of uridine 5-monophosphate (from uridine 5-triphosphate), a reaction catalyzed by the N-terminal domain. In Escherichia fergusonii (strain ATCC 35469 / DSM 13698 / CCUG 18766 / IAM 14443 / JCM 21226 / LMG 7866 / NBRC 102419 / NCTC 12128 / CDC 0568-73), this protein is Bifunctional protein GlmU.